A 179-amino-acid polypeptide reads, in one-letter code: NAD(P)H-quinone oxidoreductase subunit I, chloroplastic (179 aa).

2 4Fe-4S ferredoxin-type domains span residues 55–84 and 95–124; these read GRIH…VDWR and LNYS…MTEE. Residues cysteine 64, cysteine 67, cysteine 70, cysteine 74, cysteine 104, cysteine 107, cysteine 110, and cysteine 114 each contribute to the [4Fe-4S] cluster site.

This sequence belongs to the complex I 23 kDa subunit family. In terms of assembly, NDH is composed of at least 16 different subunits, 5 of which are encoded in the nucleus. The cofactor is [4Fe-4S] cluster.

Its subcellular location is the plastid. The protein localises to the chloroplast thylakoid membrane. It catalyses the reaction a plastoquinone + NADH + (n+1) H(+)(in) = a plastoquinol + NAD(+) + n H(+)(out). It carries out the reaction a plastoquinone + NADPH + (n+1) H(+)(in) = a plastoquinol + NADP(+) + n H(+)(out). NDH shuttles electrons from NAD(P)H:plastoquinone, via FMN and iron-sulfur (Fe-S) centers, to quinones in the photosynthetic chain and possibly in a chloroplast respiratory chain. The immediate electron acceptor for the enzyme in this species is believed to be plastoquinone. Couples the redox reaction to proton translocation, and thus conserves the redox energy in a proton gradient. This Nuphar advena (Common spatterdock) protein is NAD(P)H-quinone oxidoreductase subunit I, chloroplastic.